The sequence spans 73 residues: Mu-sparatoxin-Hv2 (73 aa).

The N-terminal stretch at 1-20 (MKFAIVITLLLVAFSAVALA) is a signal peptide. The propeptide occupies 21-35 (DKSIERAVMDLITAR). 3 disulfides stabilise this stretch: Cys-39–Cys-53, Cys-46–Cys-58, and Cys-52–Cys-68. Phe-72 carries the post-translational modification Phenylalanine amide.

Belongs to the neurotoxin 10 (Hwtx-1) family. In terms of tissue distribution, expressed by the venom gland.

Its subcellular location is the secreted. In terms of biological role, insecticidal toxin that potently and irreversibly blocks voltage-gated sodium channels (Nav) in cockroach dorsal unpaired median (DUM) neurons (IC(50)=833.7 nM). It does not change both the steady-state activation and inactivation curves, suggesting it acts as a pore blocker (possibly at Nav site 1). Does not show toxicity when intraperitoneally injected into mouse. The protein is Mu-sparatoxin-Hv2 of Heteropoda venatoria (Brown huntsman spider).